The chain runs to 399 residues: Paraneoplastic antigen-like protein 6A (399 aa).

This sequence belongs to the PNMA family. In terms of tissue distribution, expressed in the brain.

The polypeptide is Paraneoplastic antigen-like protein 6A (Homo sapiens (Human)).